A 313-amino-acid chain; its full sequence is Ribosomal protein L11 methyltransferase (313 aa).

S-adenosyl-L-methionine contacts are provided by Thr164, Gly185, Asp207, and Asn249.

Belongs to the methyltransferase superfamily. PrmA family.

It localises to the cytoplasm. It catalyses the reaction L-lysyl-[protein] + 3 S-adenosyl-L-methionine = N(6),N(6),N(6)-trimethyl-L-lysyl-[protein] + 3 S-adenosyl-L-homocysteine + 3 H(+). Its function is as follows. Methylates ribosomal protein L11. This is Ribosomal protein L11 methyltransferase from Clostridium perfringens (strain 13 / Type A).